The chain runs to 333 residues: Terminal uridylyltransferase 4 (333 aa).

UTP is bound by residues Ser-54 and 65-68 (SDVD). The Mg(2+) site is built by Asp-66 and Asp-68. An RNA-binding site is contributed by Arg-121. UTP contacts are provided by residues 144–148 (GVRNS), Lys-169, Lys-173, and 188–189 (SY). The PAP-associated domain maps to 237-302 (LGTQVLDFLH…WCIEDPYELN (66 aa)).

This sequence belongs to the DNA polymerase type-B-like family. Monomer. Mg(2+) is required as a cofactor. Mn(2+) serves as cofactor.

The enzyme catalyses RNA(n) + UTP = RNA(n)-3'-uridine ribonucleotide + diphosphate. The 3' uridylated RNA substrate is involved in the selective incorporation of UTP; UTP binding is favored due to the constraint posed on the positioning of the NTP base by the continuous stacking interactions between Tyr-189 side chain, the bound NTP, and the terminal nucleoside base of the RNA substrate. In terms of biological role, terminal uridylyltransferase which, specifically, catalyzes the addition of Us to the 3'-hydroxyl group of single-stranded RNAs with a 3'-terminal U. The protein is Terminal uridylyltransferase 4 of Trypanosoma brucei brucei (strain 927/4 GUTat10.1).